We begin with the raw amino-acid sequence, 416 residues long: Tyrosine--tRNA ligase (416 aa).

Residue Tyr37 coordinates L-tyrosine. The short motif at 42-51 is the 'HIGH' region element; that stretch reads PTADSLHVGN. The L-tyrosine site is built by Tyr176 and Gln180. Positions 236-240 match the 'KMSKS' region motif; it reads KMGKS. Lys239 lines the ATP pocket. Residues 350–416 form the S4 RNA-binding domain; it reads LPAFRVFQEA…KKKHILLRPV (67 aa).

It belongs to the class-I aminoacyl-tRNA synthetase family. TyrS type 1 subfamily. In terms of assembly, homodimer.

Its subcellular location is the cytoplasm. It catalyses the reaction tRNA(Tyr) + L-tyrosine + ATP = L-tyrosyl-tRNA(Tyr) + AMP + diphosphate + H(+). Catalyzes the attachment of tyrosine to tRNA(Tyr) in a two-step reaction: tyrosine is first activated by ATP to form Tyr-AMP and then transferred to the acceptor end of tRNA(Tyr). The chain is Tyrosine--tRNA ligase from Gluconobacter oxydans (strain 621H) (Gluconobacter suboxydans).